The chain runs to 615 residues: Dolichyl-diphosphooligosaccharide--protein glycosyltransferase subunit 1A (615 aa).

A signal peptide spans 1-28 (MATPPPLRRVAALLLLLVAAASTPTARA). The Lumenal segment spans residues 29 to 437 (DLVVTRADRK…RFNNISLLRE (409 aa)). Lys-187 is subject to N6-acetyllysine. N-linked (GlcNAc...) asparagine glycans are attached at residues Asn-300, Asn-353, and Asn-431. A helical transmembrane segment spans residues 438-455 (PMMLITGFFLLFMACIVY). The Cytoplasmic portion of the chain corresponds to 456–615 (MRTDMSISKN…ESLLEYISEI (160 aa)).

It belongs to the OST1 family. In terms of assembly, component of the oligosaccharyltransferase (OST) complex.

It is found in the endoplasmic reticulum membrane. Its pathway is protein modification; protein glycosylation. Its function is as follows. Subunit of the oligosaccharyl transferase (OST) complex that catalyzes the initial transfer of a defined glycan (Glc(3)Man(9)GlcNAc(2) in eukaryotes) from the lipid carrier dolichol-pyrophosphate to an asparagine residue within an Asn-X-Ser/Thr consensus motif in nascent polypeptide chains, the first step in protein N-glycosylation. N-glycosylation occurs cotranslationally and the complex associates with the Sec61 complex at the channel-forming translocon complex that mediates protein translocation across the endoplasmic reticulum (ER). All subunits are required for a maximal enzyme activity. This Oryza sativa subsp. japonica (Rice) protein is Dolichyl-diphosphooligosaccharide--protein glycosyltransferase subunit 1A (OST1A).